A 354-amino-acid polypeptide reads, in one-letter code: UDP-3-O-acylglucosamine N-acyltransferase (354 aa).

His-258 (proton acceptor) is an active-site residue.

This sequence belongs to the transferase hexapeptide repeat family. LpxD subfamily. As to quaternary structure, homotrimer.

It carries out the reaction a UDP-3-O-[(3R)-3-hydroxyacyl]-alpha-D-glucosamine + a (3R)-hydroxyacyl-[ACP] = a UDP-2-N,3-O-bis[(3R)-3-hydroxyacyl]-alpha-D-glucosamine + holo-[ACP] + H(+). It functions in the pathway bacterial outer membrane biogenesis; LPS lipid A biosynthesis. Functionally, catalyzes the N-acylation of UDP-3-O-acylglucosamine using 3-hydroxyacyl-ACP as the acyl donor. Is involved in the biosynthesis of lipid A, a phosphorylated glycolipid that anchors the lipopolysaccharide to the outer membrane of the cell. The sequence is that of UDP-3-O-acylglucosamine N-acyltransferase from Rhizobium meliloti (strain 1021) (Ensifer meliloti).